A 433-amino-acid chain; its full sequence is Glucose-6-phosphate isomerase (433 aa).

Glu285 functions as the Proton donor in the catalytic mechanism. Catalysis depends on residues His306 and Lys421.

It belongs to the GPI family.

The protein localises to the cytoplasm. The catalysed reaction is alpha-D-glucose 6-phosphate = beta-D-fructose 6-phosphate. It participates in carbohydrate biosynthesis; gluconeogenesis. The protein operates within carbohydrate degradation; glycolysis; D-glyceraldehyde 3-phosphate and glycerone phosphate from D-glucose: step 2/4. Catalyzes the reversible isomerization of glucose-6-phosphate to fructose-6-phosphate. This Mycoplasma mobile (strain ATCC 43663 / 163K / NCTC 11711) (Mesomycoplasma mobile) protein is Glucose-6-phosphate isomerase.